A 547-amino-acid polypeptide reads, in one-letter code: Varicidin biosynthesis cluster MFS-type transporer (547 aa).

Positions 1–17 (MTTSTSKNAISKSSQED) are enriched in polar residues. A disordered region spans residues 1–33 (MTTSTSKNAISKSSQEDLCSDTKDKGSSGGGNE). A run of 11 helical transmembrane segments spans residues 47–67 (LVLL…VCIS), 156–176 (LAPS…SVFT), 183–203 (WCFW…FLFV), 224–244 (ALGT…LQWG), 252–272 (SWRV…WLYV), 296–316 (ILFT…VPIW), 330–350 (INFL…GTLV), 360–382 (GQWR…WRYN), 392–412 (AGTL…PFIA), 422–442 (ISLG…VFLA), and 503–523 (CFLV…GMEW).

This sequence belongs to the major facilitator superfamily. TCR/Tet family.

It is found in the cell membrane. Functionally, MFS-type transporer; part of the gene cluster that mediates the biosynthesis of varicidin A, an antifungal natural product containing a cis-octahydrodecalin core. In Talaromyces variabilis (Penicillium variabile), this protein is Varicidin biosynthesis cluster MFS-type transporer.